The primary structure comprises 568 residues: Oxygen-dependent choline dehydrogenase (568 aa).

8-37 (DYIIIGAGSAGNTLAARLTEDAGVTVLLLE) contacts FAD. The Proton acceptor role is filled by H477.

The protein belongs to the GMC oxidoreductase family. It depends on FAD as a cofactor.

It catalyses the reaction choline + A = betaine aldehyde + AH2. The catalysed reaction is betaine aldehyde + NAD(+) + H2O = glycine betaine + NADH + 2 H(+). The protein operates within amine and polyamine biosynthesis; betaine biosynthesis via choline pathway; betaine aldehyde from choline (cytochrome c reductase route): step 1/1. Its function is as follows. Involved in the biosynthesis of the osmoprotectant glycine betaine. Catalyzes the oxidation of choline to betaine aldehyde and betaine aldehyde to glycine betaine at the same rate. This is Oxygen-dependent choline dehydrogenase from Pseudomonas syringae pv. tomato (strain ATCC BAA-871 / DC3000).